The primary structure comprises 666 residues: ATP synthase subunit alpha 2 (666 aa).

182–189 (GDRATGKT) contributes to the ATP binding site. The interval 527–666 (MPAEDAAGDI…DAEAEARHKR (140 aa)) is disordered. Residues 545 to 590 (ARGDADRDADHGANREVSREVSPEASREVSREVSCEVSHEADRDAA) are compositionally biased toward basic and acidic residues. The span at 591 to 601 (ADAARVAGRAP) shows a compositional bias: low complexity. Over residues 623-641 (ADGDRASASRPRPDARGDA) the composition is skewed to basic and acidic residues.

The protein belongs to the ATPase alpha/beta chains family. F-type ATPases have 2 components, CF(1) - the catalytic core - and CF(0) - the membrane proton channel. CF(1) has five subunits: alpha(3), beta(3), gamma(1), delta(1), epsilon(1). CF(0) has three main subunits: a(1), b(2) and c(9-12). The alpha and beta chains form an alternating ring which encloses part of the gamma chain. CF(1) is attached to CF(0) by a central stalk formed by the gamma and epsilon chains, while a peripheral stalk is formed by the delta and b chains.

It localises to the cell inner membrane. It carries out the reaction ATP + H2O + 4 H(+)(in) = ADP + phosphate + 5 H(+)(out). Its function is as follows. Produces ATP from ADP in the presence of a proton gradient across the membrane. The alpha chain is a regulatory subunit. The polypeptide is ATP synthase subunit alpha 2 (Burkholderia pseudomallei (strain 1106a)).